The sequence spans 175 residues: Ribosome maturation factor RimM (175 aa).

Positions 96–175 (EGDFYWHDLI…TIEVDWDAGF (80 aa)) constitute a PRC barrel domain.

The protein belongs to the RimM family. As to quaternary structure, binds ribosomal protein uS19.

It is found in the cytoplasm. An accessory protein needed during the final step in the assembly of 30S ribosomal subunit, possibly for assembly of the head region. Essential for efficient processing of 16S rRNA. May be needed both before and after RbfA during the maturation of 16S rRNA. It has affinity for free ribosomal 30S subunits but not for 70S ribosomes. The sequence is that of Ribosome maturation factor RimM from Histophilus somni (strain 129Pt) (Haemophilus somnus).